We begin with the raw amino-acid sequence, 475 residues long: Bifunctional protein HldE (475 aa).

The interval 1–318 is ribokinase; sequence MMQYSPKFNN…ENAIHHREET (318 aa). 195–198 is an ATP binding site; the sequence is NMSE. Asp-264 is a catalytic residue. Positions 344-475 are cytidylyltransferase; the sequence is MTNGCFDILH…NVIKKIQASK (132 aa).

This sequence in the N-terminal section; belongs to the carbohydrate kinase PfkB family. The protein in the C-terminal section; belongs to the cytidylyltransferase family. Homodimer.

The enzyme catalyses D-glycero-beta-D-manno-heptose 7-phosphate + ATP = D-glycero-beta-D-manno-heptose 1,7-bisphosphate + ADP + H(+). The catalysed reaction is D-glycero-beta-D-manno-heptose 1-phosphate + ATP + H(+) = ADP-D-glycero-beta-D-manno-heptose + diphosphate. Its pathway is nucleotide-sugar biosynthesis; ADP-L-glycero-beta-D-manno-heptose biosynthesis; ADP-L-glycero-beta-D-manno-heptose from D-glycero-beta-D-manno-heptose 7-phosphate: step 1/4. It participates in nucleotide-sugar biosynthesis; ADP-L-glycero-beta-D-manno-heptose biosynthesis; ADP-L-glycero-beta-D-manno-heptose from D-glycero-beta-D-manno-heptose 7-phosphate: step 3/4. Catalyzes the phosphorylation of D-glycero-D-manno-heptose 7-phosphate at the C-1 position to selectively form D-glycero-beta-D-manno-heptose-1,7-bisphosphate. Functionally, catalyzes the ADP transfer from ATP to D-glycero-beta-D-manno-heptose 1-phosphate, yielding ADP-D-glycero-beta-D-manno-heptose. The polypeptide is Bifunctional protein HldE (Actinobacillus pleuropneumoniae serotype 5b (strain L20)).